We begin with the raw amino-acid sequence, 186 residues long: Peptidyl-tRNA hydrolase (186 aa).

Residue Y14 coordinates tRNA. Residue H19 is the Proton acceptor of the active site. TRNA contacts are provided by F65, N67, and N113.

Belongs to the PTH family. In terms of assembly, monomer.

It is found in the cytoplasm. It carries out the reaction an N-acyl-L-alpha-aminoacyl-tRNA + H2O = an N-acyl-L-amino acid + a tRNA + H(+). Functionally, hydrolyzes ribosome-free peptidyl-tRNAs (with 1 or more amino acids incorporated), which drop off the ribosome during protein synthesis, or as a result of ribosome stalling. Its function is as follows. Catalyzes the release of premature peptidyl moieties from peptidyl-tRNA molecules trapped in stalled 50S ribosomal subunits, and thus maintains levels of free tRNAs and 50S ribosomes. This is Peptidyl-tRNA hydrolase from Limosilactobacillus fermentum (strain NBRC 3956 / LMG 18251) (Lactobacillus fermentum).